A 548-amino-acid chain; its full sequence is Alpha-1,3-mannosyl-glycoprotein 4-beta-N-acetylglucosaminyltransferase B (548 aa).

Topologically, residues 1-7 (MRLRNGT) are cytoplasmic. A helical; Signal-anchor for type II membrane protein transmembrane segment spans residues 8 to 28 (FLTLLLFCLCAFLSLSWYAAL). Residues 29–548 (SGQKGDVVDI…LSEIFLKKAD (520 aa)) are Lumenal-facing. Residues 36–83 (VDIYQREFLALRDRLHAAEQESLKRSKELNLVLEEIKRAVSERQALRD) adopt a coiled-coil conformation. Residues Asn87 and Asn103 are each glycosylated (N-linked (GlcNAc...) asparagine).

Belongs to the glycosyltransferase 54 family. In terms of assembly, interacts with SLC35A3. It depends on a divalent metal cation as a cofactor. Post-translationally, N-glycosylated.

The protein localises to the golgi apparatus membrane. It catalyses the reaction N(4)-{beta-D-GlcNAc-(1-&gt;2)-alpha-D-Man-(1-&gt;3)-[beta-D-GlcNAc-(1-&gt;2)-alpha-D-Man-(1-&gt;6)]-beta-D-Man-(1-&gt;4)-beta-D-GlcNAc-(1-&gt;4)-beta-D-GlcNAc}-L-asparaginyl-[protein] + UDP-N-acetyl-alpha-D-glucosamine = N(4)-{beta-D-GlcNAc-(1-&gt;2)-[beta-D-GlcNAc-(1-&gt;4)]-alpha-D-Man-(1-&gt;3)-[beta-D-GlcNAc-(1-&gt;2)-alpha-D-Man-(1-&gt;6)]-beta-D-Man-(1-&gt;4)-beta-D-GlcNAc-(1-&gt;4)-beta-D-GlcNAc}-L-asparaginyl-[protein] + UDP + H(+). It carries out the reaction an N(4)-{beta-D-GlcNAc-(1-&gt;2)-alpha-D-Man-(1-&gt;3)-[alpha-D-Man-(1-&gt;6)]-beta-D-Man-(1-&gt;4)-beta-D-GlcNAc-(1-&gt;4)-beta-D-GlcNAc}-L-asparaginyl-[protein] + UDP-N-acetyl-alpha-D-glucosamine = an N(4)-{beta-D-GlcNAc-(1-&gt;2)-[beta-D-GlcNAc-(1-&gt;4)]-alpha-D-Man-(1-&gt;3)-[alpha-D-Man-(1-&gt;6)]-beta-D-Man-(1-&gt;4)-beta-D-GlcNAc-(1-&gt;4)-beta-D-GlcNAc}-L-asparaginyl-[protein] + UDP + H(+). The enzyme catalyses an N(4)-{beta-D-GlcNAc-(1-&gt;2)-alpha-D-Man-(1-&gt;3)-[beta-D-GlcNAc-(1-&gt;2)-[beta-D-GlcNAc-(1-&gt;6)]-alpha-D-Man-(1-&gt;6)]-beta-D-Man-(1-&gt;4)-beta-D-GlcNAc-(1-&gt;4)-beta-D-GlcNAc}-L-asparaginyl-[protein] + UDP-N-acetyl-alpha-D-glucosamine = an N(4)-{beta-D-GlcNAc-(1-&gt;2)-[beta-D-GlcNAc-(1-&gt;4)]-alpha-D-Man-(1-&gt;3)-[beta-D-GlcNAc-(1-&gt;2)-[beta-D-GlcNAc-(1-&gt;6)]-alpha-D-Man-(1-&gt;6)]-beta-D-Man-(1-&gt;4)-beta-D-GlcNAc-(1-&gt;4)-beta-D-GlcNAc}-L-asparaginyl-[protein] + UDP + H(+). The catalysed reaction is an N(4)-{beta-D-GlcNAc-(1-&gt;2)-alpha-D-Man-(1-&gt;3)-[beta-D-GlcNAc-(1-&gt;2)-alpha-D-Man-(1-&gt;6)]-beta-D-Man-(1-&gt;4)-beta-D-GlcNAc-(1-&gt;4)-[alpha-L-Fuc-(1-&gt;6)]-beta-D-GlcNAc}-L-asparaginyl-[protein] + UDP-N-acetyl-alpha-D-glucosamine = N(4)-{beta-D-GlcNAc-(1-&gt;2)-[beta-D-GlcNAc-(1-&gt;4)]-alpha-D-Man-(1-&gt;3)-[beta-D-GlcNAc-(1-&gt;2)-alpha-D-Man-(1-&gt;6)]-beta-D-Man-(1-&gt;4)-beta-D-GlcNAc-(1-&gt;4)-[alpha-L-Fuc-(1-&gt;6)]-beta-D-GlcNAc}-asparaginyl-[protein] + UDP + H(+). It catalyses the reaction an N(4)-{beta-D-GlcNAc-(1-&gt;2)-alpha-D-Man-(1-&gt;3)-[beta-D-Gal-(1-&gt;4)-beta-D-GlcNAc-(1-&gt;2)-alpha-D-Man-(1-&gt;6)]-beta-D-Man-(1-&gt;4)-beta-D-GlcNAc-(1-&gt;4)-beta-D-GlcNAc}-L-asparaginyl-[protein] + UDP-N-acetyl-alpha-D-glucosamine = an N(4)-{beta-D-GlcNAc-(1-&gt;2)-[beta-D-GlcNAc-(1-&gt;4)]-alpha-D-Man-(1-&gt;3)-[beta-D-Gal-(1-&gt;4)-beta-D-GlcNAc-(1-&gt;2)-alpha-D-Man-(1-&gt;6)]-beta-D-Man-(1-&gt;4)-beta-D-GlcNAc-(1-&gt;4)-beta-D-GlcNAc}-L-asparaginyl-[protein] + UDP + H(+). It carries out the reaction N(4)-{beta-D-GlcNAc-(1-&gt;2)-alpha-D-Man-(1-&gt;3)-[alpha-D-Man-(1-&gt;3)-{alpha-D-Man-(1-&gt;6)}-alpha-D-Man-(1-&gt;6)]-beta-D-Man-(1-&gt;4)-beta-D-GlcNAc-(1-&gt;4)-beta-D-GlcNAc}-asparaginyl-[protein] + UDP-N-acetyl-alpha-D-glucosamine = N(4)-{beta-D-GlcNAc-(1-&gt;2)-[beta-D-GlcNAc-(1-&gt;4)]-alpha-D-Man-(1-&gt;3)-[alpha-D-Man-(1-&gt;3)-{alpha-D-Man-(1-&gt;6)}-alpha-D-Man-(1-&gt;6)]-beta-D-Man-(1-&gt;4)-beta-D-GlcNAc-(1-&gt;4)-beta-D-GlcNAc}-asparaginyl-[protein] + UDP + H(+). The enzyme catalyses N(4)-{beta-D-GlcNAc-(1-&gt;2)-alpha-D-Man-(1-&gt;3)-beta-D-Man-(1-&gt;4)-beta-D-GlcNAc-(1-&gt;4)-beta-D-GlcNAc}-asparaginyl-[protein] + UDP-N-acetyl-alpha-D-glucosamine = N(4)-{beta-D-GlcNAc-(1-&gt;2)-[beta-D-GlcNAc-(1-&gt;4)]-alpha-D-Man-(1-&gt;3)-beta-D-Man-(1-&gt;4)-beta-D-GlcNAc-(1-&gt;4)-beta-D-GlcNAc}-asparaginyl-[protein] + UDP + H(+). The protein operates within protein modification; protein glycosylation. Its function is as follows. Glycosyltransferase that catalyzes the transfer of GlcNAc from UDP-GlcNAc to the GlcNAcbeta1-2Manalpha1-3 arm of the core structure of N-linked glycans through a beta1-4 linkage and participates in the production of tri- and tetra-antennary N-linked sugar chains. Prefers complex-type N-glycans over hybrid-types. Has lower affinities for donors or acceptors than MGAT4A, suggesting that, under physiological conditions, it is not the main contributor in N-glycan biosynthesis. The chain is Alpha-1,3-mannosyl-glycoprotein 4-beta-N-acetylglucosaminyltransferase B from Mus musculus (Mouse).